The following is a 493-amino-acid chain: GTPase Der (493 aa).

EngA-type G domains follow at residues 3–166 (PVVA…SGKG) and 207–380 (LKLA…DCAT). GTP is bound by residues 9-16 (GRPNVGKS), 56-60 (DTGGI), 118-121 (NKTD), 213-220 (GKPNVGKS), 260-264 (DTAGV), and 325-328 (NKWD). Residues 381 to 465 (RRVNTSLLTR…PIRIQFKEGA (85 aa)) form the KH-like domain.

The protein belongs to the TRAFAC class TrmE-Era-EngA-EngB-Septin-like GTPase superfamily. EngA (Der) GTPase family. As to quaternary structure, associates with the 50S ribosomal subunit.

In terms of biological role, GTPase that plays an essential role in the late steps of ribosome biogenesis. This Photorhabdus laumondii subsp. laumondii (strain DSM 15139 / CIP 105565 / TT01) (Photorhabdus luminescens subsp. laumondii) protein is GTPase Der.